A 284-amino-acid chain; its full sequence is Sulfotransferase 2A6 (284 aa).

Residue 43–48 (KSGTNW) coordinates 3'-phosphoadenylyl sulfate. The active-site Proton acceptor is the H98. 3'-phosphoadenylyl sulfate contacts are provided by residues R120, S128, Y183, 217 to 222 (SSFQVM), and 246 to 248 (RNG).

The protein belongs to the sulfotransferase 1 family. In terms of assembly, oligomer. Liver, exhibiting a sex-dependent spatial localization in the lobule of the liver.

The protein localises to the cytoplasm. It localises to the cytosol. It carries out the reaction an alcohol + 3'-phosphoadenylyl sulfate = an alkyl sulfate + adenosine 3',5'-bisphosphate + H(+). The catalysed reaction is glycolithocholate + 3'-phosphoadenylyl sulfate = sulfoglycolithocholate + adenosine 3',5'-bisphosphate + H(+). It catalyses the reaction taurolithocholate + 3'-phosphoadenylyl sulfate = taurolithocholate 3-sulfate + adenosine 3',5'-bisphosphate + H(+). The enzyme catalyses 3beta-hydroxyandrost-5-en-17-one + 3'-phosphoadenylyl sulfate = dehydroepiandrosterone 3-sulfate + adenosine 3',5'-bisphosphate + H(+). It carries out the reaction 3beta-hydroxy-5-cholenate + 3'-phosphoadenylyl sulfate = 3beta-sulfo-5-cholenate + adenosine 3',5'-bisphosphate + H(+). The catalysed reaction is deoxycholate + 3'-phosphoadenylyl sulfate = 3alpha-sulfodeoxycholate + adenosine 3',5'-bisphosphate + H(+). It catalyses the reaction glycodeoxycholate + 3'-phosphoadenylyl sulfate = 3alpha-sulfoglycodeoxycholate + adenosine 3',5'-bisphosphate + H(+). The enzyme catalyses taurodeoxycholate + 3'-phosphoadenylyl sulfate = 3alpha-sulfotaurodeoxycholate + adenosine 3',5'-bisphosphate + H(+). Its function is as follows. Sulfotransferase that utilizes 3'-phospho-5'-adenylyl sulfate (PAPS) as sulfonate donor to catalyze the sulfonation of the hydroxyl group of hydroxysteroids and bile acids. Prefered substrates are dehydroepiandrosterone (DHEA, also known as 3beta-hydroxyandrost-5-en-17-one) and 3beta-hydroxy-5-cholenoate, but can also catalyze deoxycholate and its conjugates, and lithocholate conjugates, in vitro. The polypeptide is Sulfotransferase 2A6 (Rattus norvegicus (Rat)).